Reading from the N-terminus, the 273-residue chain is 3-methyl-2-oxobutanoate hydroxymethyltransferase 2 (273 aa).

Residues D50 and D89 each coordinate Mg(2+). 3-methyl-2-oxobutanoate-binding positions include 50–51 (DS), D89, and K119. Mg(2+) is bound at residue E121. The active-site Proton acceptor is the E188.

It belongs to the PanB family. Homodecamer; pentamer of dimers. Mg(2+) is required as a cofactor.

Its subcellular location is the cytoplasm. It catalyses the reaction 3-methyl-2-oxobutanoate + (6R)-5,10-methylene-5,6,7,8-tetrahydrofolate + H2O = 2-dehydropantoate + (6S)-5,6,7,8-tetrahydrofolate. It functions in the pathway cofactor biosynthesis; (R)-pantothenate biosynthesis; (R)-pantoate from 3-methyl-2-oxobutanoate: step 1/2. Catalyzes the reversible reaction in which hydroxymethyl group from 5,10-methylenetetrahydrofolate is transferred onto alpha-ketoisovalerate to form ketopantoate. The chain is 3-methyl-2-oxobutanoate hydroxymethyltransferase 2 from Zymomonas mobilis subsp. mobilis (strain ATCC 31821 / ZM4 / CP4).